A 432-amino-acid chain; its full sequence is DnaJ-like protein 1 (432 aa).

The J domain maps to 4–73 (DTEYYDLLGV…RAKYDKYGRK (70 aa)). A disordered region spans residues 117-187 (NAEDEAEKEK…KKNEQVGAEA (71 aa)).

This sequence belongs to the DnaJ family. In terms of assembly, interacts with SLN1.

It localises to the cytoplasm. Functionally, required for peroxisomal protein import which maintains the function of peroxisomes. This chain is DnaJ-like protein 1 (DJP1), found in Saccharomyces cerevisiae (strain ATCC 204508 / S288c) (Baker's yeast).